The sequence spans 240 residues: Endonuclease NucS 1 (240 aa).

Belongs to the NucS endonuclease family.

It is found in the cytoplasm. In terms of biological role, cleaves both 3' and 5' ssDNA extremities of branched DNA structures. This Halobacterium salinarum (strain ATCC 700922 / JCM 11081 / NRC-1) (Halobacterium halobium) protein is Endonuclease NucS 1.